Reading from the N-terminus, the 246-residue chain is Allergin-1 (246 aa).

The signal sequence occupies residues 1–33; it reads MGDGDSPMCLSAVSFKGIRCWLDKLLLWALTIS. Residues 34–150 lie on the Extracellular side of the membrane; that stretch reads ITLQNAAVDC…DESCPSCRLS (117 aa). Residues 52–131 enclose the Ig-like C2-type domain; the sequence is PSPNLNSSMN…VNVSNLMKYS (80 aa). The N-linked (GlcNAc...) asparagine glycan is linked to Asn68. Cys73 and Cys120 are disulfide-bonded. A helical transmembrane segment spans residues 151–171; the sequence is LLLPGLLLGILVIVLVLAYLI. Residues 172-246 are Cytoplasmic-facing; the sequence is HLKYKKGKKT…ADYIYSELTH (75 aa). 2 short sequence motifs (ITIM motif) span residues 214-219 and 239-244; these read IHYATP and YIYSEL. A phosphotyrosine mark is found at Tyr216 and Tyr241.

In terms of assembly, monomer. Interacts (tyrosine-phosphorylated) with PTPN6, PTPN11 and INPP5D. Post-translationally, N-glycosylated. As to expression, expressed in myeloid cells (dendritic cells, macrophages and neutrophils but not in T-cells, B-cells or natural killer cells) and mast cells (at protein level).

It localises to the cell membrane. The protein localises to the secreted. Immunoglobulin-like receptor which plays an inhibitory role in degranulation of mast cells. Negatively regulates IgE-mediated mast cell activation and suppresses the type I immediate hypersensitivity reaction. This chain is Allergin-1 (Milr1), found in Mus musculus (Mouse).